Reading from the N-terminus, the 180-residue chain is Crossover junction endodeoxyribonuclease RuvC (180 aa).

Catalysis depends on residues Asp7, Glu66, and Asp138. Asp7, Glu66, and Asp138 together coordinate Mg(2+).

The protein belongs to the RuvC family. As to quaternary structure, homodimer which binds Holliday junction (HJ) DNA. The HJ becomes 2-fold symmetrical on binding to RuvC with unstacked arms; it has a different conformation from HJ DNA in complex with RuvA. In the full resolvosome a probable DNA-RuvA(4)-RuvB(12)-RuvC(2) complex forms which resolves the HJ. Requires Mg(2+) as cofactor.

It is found in the cytoplasm. The enzyme catalyses Endonucleolytic cleavage at a junction such as a reciprocal single-stranded crossover between two homologous DNA duplexes (Holliday junction).. In terms of biological role, the RuvA-RuvB-RuvC complex processes Holliday junction (HJ) DNA during genetic recombination and DNA repair. Endonuclease that resolves HJ intermediates. Cleaves cruciform DNA by making single-stranded nicks across the HJ at symmetrical positions within the homologous arms, yielding a 5'-phosphate and a 3'-hydroxyl group; requires a central core of homology in the junction. The consensus cleavage sequence is 5'-(A/T)TT(C/G)-3'. Cleavage occurs on the 3'-side of the TT dinucleotide at the point of strand exchange. HJ branch migration catalyzed by RuvA-RuvB allows RuvC to scan DNA until it finds its consensus sequence, where it cleaves and resolves the cruciform DNA. The polypeptide is Crossover junction endodeoxyribonuclease RuvC (Janthinobacterium sp. (strain Marseille) (Minibacterium massiliensis)).